A 427-amino-acid chain; its full sequence is Protein adenylyltransferase Fic (427 aa).

Residues 17–37 (LLLASLAGLSIAIIVTHAPVF) form a helical membrane-spanning segment. TPR repeat units lie at residues 77-110 (ALAALKAASAMKHGGKHSKAVKLFQQAVSLAPHH) and 111-143 (PEILLQYGEFLEQHDVVQAEHLYNRALTANPLD). An Inhibitory (S/T)XXXE(G/N) motif motif is present at residues 200–205 (SNAIEG). ATP contacts are provided by residues Glu204 and 286–289 (VSDH). The Fido domain occupies 255–390 (ITIDDIIEIH…IRPFIRFVAR (136 aa)). The active site involves His333. ATP is bound by residues 337–344 (DGNGRTAR), 369–370 (YY), and Asn377.

The protein belongs to the fic family. As to quaternary structure, homodimer.

The protein resides in the membrane. It carries out the reaction L-tyrosyl-[protein] + ATP = O-(5'-adenylyl)-L-tyrosyl-[protein] + diphosphate. The catalysed reaction is L-threonyl-[protein] + ATP = 3-O-(5'-adenylyl)-L-threonyl-[protein] + diphosphate. The enzyme catalyses 3-O-(5'-adenylyl)-L-threonyl-[protein] + H2O = L-threonyl-[protein] + AMP + H(+). The side chain of Glu-204 determines which of the two opposing activities (AMPylase or de-AMPylase) will take place. In response to endoplasmic reticulum stress, mediates de-AMPylase activity. Adenylyltransferase activity is inhibited by the inhibitory helix present at the N-terminus: Glu-204 binds ATP and competes with ATP-binding at Arg-344, thereby preventing adenylyltransferase activity. In unstressed cells, disengagement of Glu-204 promotes adenylyltransferase activity. Activation dissociates ATP-binding from Glu-204, allowing ordered binding of the entire ATP moiety with the alpha-phosphate in an orientation that is productive for accepting an incoming target hydroxyl side chain. Its function is as follows. Protein that can both mediate the addition of adenosine 5'-monophosphate (AMP) to specific residues of target proteins (AMPylation), and the removal of the same modification from target proteins (de-AMPylation), depending on the context. The side chain of Glu-204 determines which of the two opposing activities (AMPylase or de-AMPylase) will take place. Acts as a key regulator of the unfolded protein response (UPR) by mediating AMPylation or de-AMPylation of Hsc70-3/BiP. In unstressed cells, acts as an adenylyltransferase by mediating AMPylation of Hsc70-3/BiP, thereby inactivating it. In response to endoplasmic reticulum stress, acts as a phosphodiesterase by mediating removal of ATP (de-AMPylation) from Hsc70-3/BiP, leading to restore HSPA5/BiP activity. This chain is Protein adenylyltransferase Fic, found in Nematostella vectensis (Starlet sea anemone).